The primary structure comprises 152 residues: Methylglyoxal synthase (152 aa).

The MGS-like domain occupies 6-152 (RKISARKSIA…YDGYLAERLA (147 aa)). Substrate is bound by residues H19, K23, 45-48 (TGTT), and 65-66 (SG). D71 (proton donor/acceptor) is an active-site residue. A substrate-binding site is contributed by H98.

This sequence belongs to the methylglyoxal synthase family.

It catalyses the reaction dihydroxyacetone phosphate = methylglyoxal + phosphate. Its function is as follows. Catalyzes the formation of methylglyoxal from dihydroxyacetone phosphate. The polypeptide is Methylglyoxal synthase (Actinobacillus pleuropneumoniae serotype 3 (strain JL03)).